Consider the following 119-residue polypeptide: NAD(P)H-quinone oxidoreductase subunit M (119 aa).

It belongs to the complex I NdhM subunit family. NDH-1 can be composed of about 15 different subunits; different subcomplexes with different compositions have been identified which probably have different functions.

The protein localises to the cellular thylakoid membrane. It carries out the reaction a plastoquinone + NADH + (n+1) H(+)(in) = a plastoquinol + NAD(+) + n H(+)(out). It catalyses the reaction a plastoquinone + NADPH + (n+1) H(+)(in) = a plastoquinol + NADP(+) + n H(+)(out). NDH-1 shuttles electrons from an unknown electron donor, via FMN and iron-sulfur (Fe-S) centers, to quinones in the respiratory and/or the photosynthetic chain. The immediate electron acceptor for the enzyme in this species is believed to be plastoquinone. Couples the redox reaction to proton translocation, and thus conserves the redox energy in a proton gradient. Cyanobacterial NDH-1 also plays a role in inorganic carbon-concentration. The polypeptide is NAD(P)H-quinone oxidoreductase subunit M (Crocosphaera subtropica (strain ATCC 51142 / BH68) (Cyanothece sp. (strain ATCC 51142))).